A 703-amino-acid chain; its full sequence is Polyribonucleotide nucleotidyltransferase (703 aa).

Mg(2+)-binding residues include Asp-482 and Asp-488. Residues 549-607 (PKAQVMKIPEDKVGLVIGPAGKNIKYIKEQFGASVWIDGANAYINAPTIEAVNKAADFI) form the KH domain. Positions 617-679 (GGVYEGKVIR…EQNRLNLCSP (63 aa)) constitute an S1 motif domain. The tract at residues 677-703 (CSPDYQKPENQERPRKEQLNRKPHHRK) is disordered. Residues 682 to 696 (QKPENQERPRKEQLN) show a composition bias toward basic and acidic residues.

Belongs to the polyribonucleotide nucleotidyltransferase family. The cofactor is Mg(2+).

The protein resides in the cytoplasm. It carries out the reaction RNA(n+1) + phosphate = RNA(n) + a ribonucleoside 5'-diphosphate. Involved in mRNA degradation. Catalyzes the phosphorolysis of single-stranded polyribonucleotides processively in the 3'- to 5'-direction. In Hydrogenobaculum sp. (strain Y04AAS1), this protein is Polyribonucleotide nucleotidyltransferase.